A 382-amino-acid polypeptide reads, in one-letter code: ATP phosphoribosyltransferase regulatory subunit (382 aa).

The protein belongs to the class-II aminoacyl-tRNA synthetase family. HisZ subfamily. In terms of assembly, heteromultimer composed of HisG and HisZ subunits.

The protein resides in the cytoplasm. It participates in amino-acid biosynthesis; L-histidine biosynthesis; L-histidine from 5-phospho-alpha-D-ribose 1-diphosphate: step 1/9. In terms of biological role, required for the first step of histidine biosynthesis. May allow the feedback regulation of ATP phosphoribosyltransferase activity by histidine. This Burkholderia multivorans (strain ATCC 17616 / 249) protein is ATP phosphoribosyltransferase regulatory subunit.